The following is a 513-amino-acid chain: ATP synthase subunit alpha (513 aa).

Residue 169 to 176 participates in ATP binding; the sequence is GDRQTGKT.

This sequence belongs to the ATPase alpha/beta chains family. F-type ATPases have 2 components, CF(1) - the catalytic core - and CF(0) - the membrane proton channel. CF(1) has five subunits: alpha(3), beta(3), gamma(1), delta(1), epsilon(1). CF(0) has three main subunits: a(1), b(2) and c(9-12). The alpha and beta chains form an alternating ring which encloses part of the gamma chain. CF(1) is attached to CF(0) by a central stalk formed by the gamma and epsilon chains, while a peripheral stalk is formed by the delta and b chains.

The protein localises to the cell inner membrane. The enzyme catalyses ATP + H2O + 4 H(+)(in) = ADP + phosphate + 5 H(+)(out). Its function is as follows. Produces ATP from ADP in the presence of a proton gradient across the membrane. The alpha chain is a regulatory subunit. The sequence is that of ATP synthase subunit alpha from Mannheimia succiniciproducens (strain KCTC 0769BP / MBEL55E).